The primary structure comprises 56 residues: Large ribosomal subunit protein bL33 (56 aa).

This sequence belongs to the bacterial ribosomal protein bL33 family.

This chain is Large ribosomal subunit protein bL33, found in Marinomonas sp. (strain MWYL1).